A 345-amino-acid chain; its full sequence is Meiotically up-regulated gene 97 protein (345 aa).

Transmembrane regions (helical) follow at residues 292–312 (MWVLSLLLFSAGGSVLIGLWM) and 319–329 (FAHGMLLNLGI).

The protein localises to the membrane. Required for correct meiotic chromosome segregation. Appears to also have role in sporulation. The protein is Meiotically up-regulated gene 97 protein (mug97) of Schizosaccharomyces pombe (strain 972 / ATCC 24843) (Fission yeast).